A 120-amino-acid chain; its full sequence is Large ribosomal subunit protein uL18c (120 aa).

The protein belongs to the universal ribosomal protein uL18 family. Part of the 50S ribosomal subunit; contacts the 5S rRNA.

It is found in the plastid. It localises to the chloroplast. Functionally, binds 5S rRNA, forms part of the central protuberance of the 50S subunit. The polypeptide is Large ribosomal subunit protein uL18c (rpl18) (Porphyra purpurea (Red seaweed)).